The chain runs to 745 residues: MSIELLFCKSQVYIHPTKNLQDNVSGYLLITHQSNSETITSSTISWIPENSLNEEDINFLNNAETRNINEKILRLPVSSRKLNTLLGSGSFLSSNWQFTIPVLSLYSVQFKLPNTWWYGSCILYSKSPRETESIPVLYFHDDLCPSTISKQKELNRSFDPFNNSNEMYWGGQDFKDALGSIVELKRVESEPTFWLVNATLEDLRNFSSANLKSSEEKPSSSKDDGVTKLKEDAWQKWESTKWSLMSQFADITAKTGSFVGSLIKKHPVVQLVERNKNNYYVQKMLKNPKVVEIQDDFDSAKIYLAKWALSVKEEAERYQEGSYDNPYRRILVSEFGLTGNEDVSFTEEELNRAMERNHPMTKQKWNSLFDSEGRLTVTVNEVKDYIFHGGLADDATRKEVWPFLLGVYPWDSSEDERKQLRKALHDEYMELKQKWVDREVNLDNDEEEYWKDQLFRIEKDVKRNDRNIDIYKYNTSDNLPFPEDTAPTTDDDDSIKNPNLKKLADILTTYNIFNPNLGYVQGMTDLLSPLYYIIRDEETTFWCFTNFMERMERNFLRDQSGIRDQMLALTDLCQLMLPRLSAHLQKCDSSDLFFCFRMLLVWFKREFNYDDIFNIWEVFFTDFYSSQYQLFFMLAILQKNSSPIVNNLQTFDQVIKYFNDLNSKMNWRDLMVRSELLFIQFHKTADLLARRQEQLIPENSGHDTSDIEGGTEPKTQSYISEHLQTLLSKEVIIQKENTRTKDSIK.

A Rab-GAP TBC domain is found at 391–623; sequence LADDATRKEV…NIWEVFFTDF (233 aa).

Most effectively accelerate the intrinsic GTPase activity of YPT7. It is also active, but to a lesser extent, on YPT31, YPT32 and YPT1. YPT6 and SEC4. The sequence is that of GTPase-activating protein GYP7 (GYP7) from Candida glabrata (strain ATCC 2001 / BCRC 20586 / JCM 3761 / NBRC 0622 / NRRL Y-65 / CBS 138) (Yeast).